Reading from the N-terminus, the 312-residue chain is Borealin-2 (312 aa).

Positions 1 to 10 are enriched in basic residues; the sequence is MPPRKAPAKR. The tract at residues 1–26 is disordered; sequence MPPRKAPAKRRSTDSGVERDRGALSQ. The span at 11–26 shows a compositional bias: basic and acidic residues; it reads RSTDSGVERDRGALSQ.

Belongs to the borealin family. In terms of assembly, component of the CPC complex.

Its subcellular location is the nucleus. It is found in the chromosome. The protein resides in the centromere. Its function is as follows. Component of the chromosomal passenger complex (CPC), a complex that acts as a key regulator of mitosis. The CPC complex has essential functions at the centromere in ensuring correct chromosome alignment and segregation and is required for chromatin-induced microtubule stabilization and spindle assembly. This is Borealin-2 from Gallus gallus (Chicken).